The sequence spans 259 residues: Tryptophan synthase alpha chain (259 aa).

Catalysis depends on proton acceptor residues Glu52 and Asp63.

It belongs to the TrpA family. Tetramer of two alpha and two beta chains.

The catalysed reaction is (1S,2R)-1-C-(indol-3-yl)glycerol 3-phosphate + L-serine = D-glyceraldehyde 3-phosphate + L-tryptophan + H2O. Its pathway is amino-acid biosynthesis; L-tryptophan biosynthesis; L-tryptophan from chorismate: step 5/5. Its function is as follows. The alpha subunit is responsible for the aldol cleavage of indoleglycerol phosphate to indole and glyceraldehyde 3-phosphate. The protein is Tryptophan synthase alpha chain of Streptococcus sanguinis (strain SK36).